The chain runs to 801 residues: Probable inorganic carbon transporter subunit DabA (801 aa).

Zn(2+) is bound by residues Cys-298, Asp-300, His-481, and Cys-496. Residues 575-596 form a disordered region; that stretch reads RENAAAERAESMGSDASSGVSE.

Belongs to the inorganic carbon transporter (TC 9.A.2) DabA family. Forms a complex with DabB. Requires Zn(2+) as cofactor.

It localises to the cell membrane. In terms of biological role, part of an energy-coupled inorganic carbon pump. This Haloarcula marismortui (strain ATCC 43049 / DSM 3752 / JCM 8966 / VKM B-1809) (Halobacterium marismortui) protein is Probable inorganic carbon transporter subunit DabA.